The primary structure comprises 83 residues: Small ribosomal subunit protein eS27 (83 aa).

The C4-type zinc finger occupies 37–59 (CPGCFNITTVFSHAQTVVICGSC).

Belongs to the eukaryotic ribosomal protein eS27 family. In terms of assembly, component of the small ribosomal subunit (SSU). Mature yeast ribosomes consist of a small (40S) and a large (60S) subunit. The 40S small subunit contains 1 molecule of ribosomal RNA (18S rRNA) and at least 33 different proteins. The large 60S subunit contains 3 rRNA molecules (25S, 5.8S and 5S rRNA) and at least 46 different proteins. Zn(2+) is required as a cofactor.

The protein localises to the cytoplasm. In terms of biological role, component of the ribosome, a large ribonucleoprotein complex responsible for the synthesis of proteins in the cell. The small ribosomal subunit (SSU) binds messenger RNAs (mRNAs) and translates the encoded message by selecting cognate aminoacyl-transfer RNA (tRNA) molecules. The large subunit (LSU) contains the ribosomal catalytic site termed the peptidyl transferase center (PTC), which catalyzes the formation of peptide bonds, thereby polymerizing the amino acids delivered by tRNAs into a polypeptide chain. The nascent polypeptides leave the ribosome through a tunnel in the LSU and interact with protein factors that function in enzymatic processing, targeting, and the membrane insertion of nascent chains at the exit of the ribosomal tunnel. The polypeptide is Small ribosomal subunit protein eS27 (rps27) (Schizosaccharomyces pombe (strain 972 / ATCC 24843) (Fission yeast)).